Here is a 245-residue protein sequence, read N- to C-terminus: 1-(5-phosphoribosyl)-5-[(5-phosphoribosylamino)methylideneamino] imidazole-4-carboxamide isomerase (245 aa).

Catalysis depends on aspartate 7, which acts as the Proton acceptor. The active-site Proton donor is the aspartate 129.

This sequence belongs to the HisA/HisF family.

The protein resides in the cytoplasm. The enzyme catalyses 1-(5-phospho-beta-D-ribosyl)-5-[(5-phospho-beta-D-ribosylamino)methylideneamino]imidazole-4-carboxamide = 5-[(5-phospho-1-deoxy-D-ribulos-1-ylimino)methylamino]-1-(5-phospho-beta-D-ribosyl)imidazole-4-carboxamide. It participates in amino-acid biosynthesis; L-histidine biosynthesis; L-histidine from 5-phospho-alpha-D-ribose 1-diphosphate: step 4/9. The polypeptide is 1-(5-phosphoribosyl)-5-[(5-phosphoribosylamino)methylideneamino] imidazole-4-carboxamide isomerase (Vibrio vulnificus (strain CMCP6)).